The chain runs to 186 residues: Protein GrpE (186 aa).

A compositionally biased stretch (polar residues) spans 1–15; the sequence is MADEQQTLDQQTPEQ. The segment at 1 to 20 is disordered; that stretch reads MADEQQTLDQQTPEQPTGAA.

This sequence belongs to the GrpE family. In terms of assembly, homodimer.

Its subcellular location is the cytoplasm. Its function is as follows. Participates actively in the response to hyperosmotic and heat shock by preventing the aggregation of stress-denatured proteins, in association with DnaK and GrpE. It is the nucleotide exchange factor for DnaK and may function as a thermosensor. Unfolded proteins bind initially to DnaJ; upon interaction with the DnaJ-bound protein, DnaK hydrolyzes its bound ATP, resulting in the formation of a stable complex. GrpE releases ADP from DnaK; ATP binding to DnaK triggers the release of the substrate protein, thus completing the reaction cycle. Several rounds of ATP-dependent interactions between DnaJ, DnaK and GrpE are required for fully efficient folding. The polypeptide is Protein GrpE (Pseudomonas aeruginosa (strain UCBPP-PA14)).